A 173-amino-acid chain; its full sequence is S-ribosylhomocysteine lyase (173 aa).

Fe cation-binding residues include histidine 54, histidine 58, and cysteine 128.

This sequence belongs to the LuxS family. As to quaternary structure, homodimer. Fe cation is required as a cofactor.

It carries out the reaction S-(5-deoxy-D-ribos-5-yl)-L-homocysteine = (S)-4,5-dihydroxypentane-2,3-dione + L-homocysteine. In terms of biological role, involved in the synthesis of autoinducer 2 (AI-2) which is secreted by bacteria and is used to communicate both the cell density and the metabolic potential of the environment. The regulation of gene expression in response to changes in cell density is called quorum sensing. Catalyzes the transformation of S-ribosylhomocysteine (RHC) to homocysteine (HC) and 4,5-dihydroxy-2,3-pentadione (DPD). The chain is S-ribosylhomocysteine lyase from Hydrogenovibrio crunogenus (strain DSM 25203 / XCL-2) (Thiomicrospira crunogena).